Here is a 576-residue protein sequence, read N- to C-terminus: MDSVAFKDVSVSFSQEEWALLAPSQKKLYRDVMQETFKNLASIGEKWEDPNVEDQHRNQGRNLRSHMGERLCEGKEGSQCAETFSPNLSVTKKTAGVKPYECTICGKVFMRLSSLTRHMRSHTGYELFEKPYKCKECGKAFSYLKSFQRHERSHTGEKPYKCKQCGKTFIYHQPFQRHEQTHIGEKPYECKQCGKALSCSSSLRVHERIHTGEKPYECKQCGKAFSCSSSIRVHERTHTGEKPYACKECGKAFISHTSVLTHMITHNGDRPYKCKECGKAFIFPSFLRVHERIHTGEKPYTCKQCGKAFRCSTSIQIHERIHTGEKPYKCKECGKSFSARPAFRVHVRVHTGEKPYKCKECGKAFSRISYFRIHERTHTGEKPYECKKCGKTFNYPLDLQIHKRNHTGEKPYECKECAKTFISLENFRRHMITHTGEGPYKCRDCGKVFIFPSALRTHERTHTGEKPYECKQCGKAFSCSSYIRIHKRTHTGEKPYECKECGKAFIYPTSFQGHMRMHTGEKPYKCKECGKAFSLHSSFQRHTRIHNYEKPLECKQCGKAFSLSTSLKKHMRMHNR.

A KRAB domain is found at 4–90; it reads VAFKDVSVSF…AETFSPNLSV (87 aa). 17 consecutive C2H2-type zinc fingers follow at residues 100–122, 132–154, 160–182, 188–210, 216–238, 244–266, 272–294, 300–322, 328–350, 356–378, 384–406, 412–434, 440–462, 468–490, 496–518, 524–546, and 552–574; these read YECTICGKVFMRLSSLTRHMRSH, YKCKECGKAFSYLKSFQRHERSH, YKCKQCGKTFIYHQPFQRHEQTH, YECKQCGKALSCSSSLRVHERIH, YECKQCGKAFSCSSSIRVHERTH, YACKECGKAFISHTSVLTHMITH, YKCKECGKAFIFPSFLRVHERIH, YTCKQCGKAFRCSTSIQIHERIH, YKCKECGKSFSARPAFRVHVRVH, YKCKECGKAFSRISYFRIHERTH, YECKKCGKTFNYPLDLQIHKRNH, YECKECAKTFISLENFRRHMITH, YKCRDCGKVFIFPSALRTHERTH, YECKQCGKAFSCSSYIRIHKRTH, YECKECGKAFIYPTSFQGHMRMH, YKCKECGKAFSLHSSFQRHTRIH, and LECKQCGKAFSLSTSLKKHMRMH.

Belongs to the krueppel C2H2-type zinc-finger protein family.

Its subcellular location is the nucleus. Functionally, may be involved in transcriptional regulation. The sequence is that of Zinc finger protein 791 (ZNF791) from Pongo abelii (Sumatran orangutan).